Here is a 437-residue protein sequence, read N- to C-terminus: MADDPSAADRNVEIWKIKKLIKSLEAARGNGTSMISLIIPPKDQISRVAKMLADEFGTASNIKSRVNRLSVLGAITSVQQRLKLYNKVPPNGLVVYCGTIVTEEGKEKKVNIDFEPFKPINTSLYLCDNKFHTEALTALLSDDSKFGFIVIDGSGALFGTLQGNTREVLHKFTVDLPKKHGRGGQSALRFARLRMEKRHNYVRKVAETAVQLFISGDKVNVAGLVLAGSADFKTELSQSDMFDQRLQSKVLKLVDISYGGENGFNQAIELSTEVLSNVKFIQEKKLIGRYFDEISQDTGKYCFGVEDTLKALEMGAVEILIVYENLDTMRYVLRCNGSEEEKTLYLTPEQEKDKSHFIDKETGQEHELIESMPLLEWFANSYKKFGATLEIVTDKSQEGSQFVKGFGGIGGILRYRVDFQGMDYQGVDDEFFDLDDY.

The short motif at 61–64 (NIKS) is the NIKS motif; plays an important role in translational termination element.

It belongs to the eukaryotic release factor 1 family. In terms of assembly, component of the eRF1-eRF3-GTP ternary complex, composed of ETF1/ERF1 and eRF3 (GSPT1/ERF3A or GSPT2/ERF3B) and GTP.

Its subcellular location is the cytoplasm. Functionally, component of the eRF1-eRF3-GTP ternary complex, a ternary complex that mediates translation termination in response to the termination codons. The eRF1-eRF3-GTP complex binds to a stop codon in the ribosomal A-site. ETF1/ERF1 is responsible for stop codon recognition and inducing hydrolysis of peptidyl-tRNA. Following GTP hydrolysis, eRF3 (GSPT1/ERF3A or GSPT2/ERF3B) dissociates, permitting ETF1/eRF1 to accommodate fully in the A-site, followed by hydrolysis of peptidyl-tRNA. The chain is Eukaryotic peptide chain release factor subunit 1 (etf1) from Xenopus laevis (African clawed frog).